A 343-amino-acid chain; its full sequence is Olfactory receptor 1E3 (343 aa).

Residues 1–28 are Extracellular-facing; it reads MMKKNQTMISEFLLLGLPIQPEQQNLFY. Residue Asn-5 is glycosylated (N-linked (GlcNAc...) asparagine). A helical transmembrane segment spans residues 29 to 49; it reads ALFLAVYLTTLLGNLLVIVLI. At 50–107 the chain is on the cytoplasmic side; it reads RLDSHLHMPMYLCLSNLSFSDLCFSSVTMPKLLQNMQSQNPSIPFADCLAQMYFHLFY. Cys-97 and Cys-179 are disulfide-bonded. Residues 108–128 traverse the membrane as a helical segment; it reads GVLESFLLVVMAYHCYVAICF. The Extracellular segment spans residues 129-141; that stretch reads PLHYTTIMSPKCC. Residues 142–162 traverse the membrane as a helical segment; sequence LGLLTLSWLLTTAHATLHTLL. The Cytoplasmic portion of the chain corresponds to 163–195; it reads MARLSFCAENVIPHFFCDTSTLLKLACSNTQVN. The helical transmembrane segment at 196 to 216 threads the bilayer; the sequence is GWVMFFMGGLILVIPFLLLIM. Residues 217 to 242 are Extracellular-facing; the sequence is SCARIVSTILRVPSTGGIQKAFSTCG. Residues 243–263 traverse the membrane as a helical segment; the sequence is PHLSVVSLFYGTIIGLYLCPL. Residues 264-271 are Cytoplasmic-facing; that stretch reads TNHNTVKD. The helical transmembrane segment at 272 to 292 threads the bilayer; it reads TVMAVMYTGVTHMLNPFIYSL. Residues 293 to 310 lie on the Extracellular side of the membrane; the sequence is RNRDMRGNPGQSLQHKEN. The helical transmembrane segment at 311–331 threads the bilayer; the sequence is FFVFKIVIVGILPLLNLVGVV. Residues 332-343 are Cytoplasmic-facing; that stretch reads KLIMKYHSKSVA.

This sequence belongs to the G-protein coupled receptor 1 family.

It is found in the cell membrane. In terms of biological role, odorant receptor. This chain is Olfactory receptor 1E3 (OR1E3), found in Homo sapiens (Human).